The chain runs to 275 residues: Holocytochrome c-type synthase (275 aa).

Disordered stretches follow at residues 1–59 (MGLS…KTNS) and 83–102 (KENL…PAPD). G2 carries the N-myristoyl glycine lipid modification. Over residues 9-28 (AASTVQTSTPAASDHQTAAP) the composition is skewed to polar residues. 2 HRM repeats span residues 31-36 (GCPMHE) and 41-46 (GCPVSA). Positions 48-59 (PSDSTCGSKTNS) are enriched in polar residues. Over residues 91–102 (LMPPPNQTPAPD) the composition is skewed to pro residues.

Belongs to the cytochrome c-type heme lyase family.

Its subcellular location is the mitochondrion inner membrane. It is found in the membrane. It catalyses the reaction holo-[cytochrome c] = apo-[cytochrome c] + heme b. In terms of biological role, lyase that catalyzes the covalent linking of the heme group to the cytochrome C apoprotein to produce the mature functional cytochrome. This is Holocytochrome c-type synthase from Bos taurus (Bovine).